The following is a 262-amino-acid chain: 4-hydroxy-2-oxo-heptane-1,7-dioate aldolase (262 aa).

His-45 (proton acceptor) is an active-site residue. Gln-147 lines the substrate pocket. Glu-149 contacts a divalent metal cation. Residues Ala-174 and Asp-175 each coordinate substrate. Asp-175 provides a ligand contact to a divalent metal cation.

Belongs to the HpcH/HpaI aldolase family. As to quaternary structure, homohexamer; trimer of dimers. A divalent metal cation is required as a cofactor.

The catalysed reaction is 4-hydroxy-2-oxoheptanedioate = succinate semialdehyde + pyruvate. Its pathway is aromatic compound metabolism; 4-hydroxyphenylacetate degradation; pyruvate and succinate semialdehyde from 4-hydroxyphenylacetate: step 7/7. In terms of biological role, catalyzes the reversible retro-aldol cleavage of 4-hydroxy-2-ketoheptane-1,7-dioate (HKHD) to pyruvate and succinic semialdehyde. In Shigella boydii serotype 4 (strain Sb227), this protein is 4-hydroxy-2-oxo-heptane-1,7-dioate aldolase.